The following is a 228-amino-acid chain: Small ribosomal subunit protein uS3 (228 aa).

A KH type-2 domain is found at 39-107; it reads VREYLQDKLK…PVHINIEEIR (69 aa).

The protein belongs to the universal ribosomal protein uS3 family. In terms of assembly, part of the 30S ribosomal subunit. Forms a tight complex with proteins S10 and S14.

Its function is as follows. Binds the lower part of the 30S subunit head. Binds mRNA in the 70S ribosome, positioning it for translation. This Stutzerimonas stutzeri (strain A1501) (Pseudomonas stutzeri) protein is Small ribosomal subunit protein uS3.